Reading from the N-terminus, the 172-residue chain is MORN repeat-containing protein 5 (172 aa).

3 MORN repeats span residues 8-30 (YIGE…TETK), 31-53 (YIGE…NGSR), and 54-75 (FDAV…DGLQ).

Its subcellular location is the cell projection. The protein localises to the cilium. It is found in the flagellum. This Bos taurus (Bovine) protein is MORN repeat-containing protein 5 (MORN5).